Reading from the N-terminus, the 611-residue chain is DNA mismatch repair protein MutL (611 aa).

This sequence belongs to the DNA mismatch repair MutL/HexB family.

In terms of biological role, this protein is involved in the repair of mismatches in DNA. It is required for dam-dependent methyl-directed DNA mismatch repair. May act as a 'molecular matchmaker', a protein that promotes the formation of a stable complex between two or more DNA-binding proteins in an ATP-dependent manner without itself being part of a final effector complex. The sequence is that of DNA mismatch repair protein MutL from Rickettsia bellii (strain RML369-C).